A 364-amino-acid polypeptide reads, in one-letter code: tRNA 2-selenouridine synthase (364 aa).

In terms of domain architecture, Rhodanese spans 14–137 (LLADTPLIDV…LRQTAIQATW (124 aa)). C97 functions as the S-selanylcysteine intermediate in the catalytic mechanism.

The protein belongs to the SelU family. As to quaternary structure, monomer.

It catalyses the reaction 5-methylaminomethyl-2-thiouridine(34) in tRNA + selenophosphate + (2E)-geranyl diphosphate + H2O + H(+) = 5-methylaminomethyl-2-selenouridine(34) in tRNA + (2E)-thiogeraniol + phosphate + diphosphate. The catalysed reaction is 5-methylaminomethyl-2-thiouridine(34) in tRNA + (2E)-geranyl diphosphate = 5-methylaminomethyl-S-(2E)-geranyl-thiouridine(34) in tRNA + diphosphate. The enzyme catalyses 5-methylaminomethyl-S-(2E)-geranyl-thiouridine(34) in tRNA + selenophosphate + H(+) = 5-methylaminomethyl-2-(Se-phospho)selenouridine(34) in tRNA + (2E)-thiogeraniol. It carries out the reaction 5-methylaminomethyl-2-(Se-phospho)selenouridine(34) in tRNA + H2O = 5-methylaminomethyl-2-selenouridine(34) in tRNA + phosphate. Functionally, involved in the post-transcriptional modification of the uridine at the wobble position (U34) of tRNA(Lys), tRNA(Glu) and tRNA(Gln). Catalyzes the conversion of 2-thiouridine (S2U-RNA) to 2-selenouridine (Se2U-RNA). Acts in a two-step process involving geranylation of 2-thiouridine (S2U) to S-geranyl-2-thiouridine (geS2U) and subsequent selenation of the latter derivative to 2-selenouridine (Se2U) in the tRNA chain. The chain is tRNA 2-selenouridine synthase from Salmonella enteritidis PT4 (strain P125109).